We begin with the raw amino-acid sequence, 23 residues long: Clavanin-B (23 aa).

Position 23 is a phenylalanine amide (phenylalanine 23).

The protein localises to the secreted. Its function is as follows. Has antimicrobial activity. The protein is Clavanin-B of Styela clava (Sea squirt).